Here is a 344-residue protein sequence, read N- to C-terminus: Mitochondrial mRNA pseudouridine synthase RPUSD3 (344 aa).

A mitochondrion-targeting transit peptide spans Met-1–Gly-41. A disordered region spans residues Phe-29 to Arg-59. Residues Lys-32–Ala-42 are compositionally biased toward basic residues. Ser-64 is modified (phosphoserine).

Belongs to the pseudouridine synthase RluA family. In terms of assembly, forms a regulatory protein-RNA complex, consisting of RCC1L, NGRN, RPUSD3, RPUSD4, TRUB2, FASTKD2 and 16S mt-rRNA.

The protein localises to the mitochondrion matrix. The catalysed reaction is a uridine in mRNA = a pseudouridine in mRNA. In terms of biological role, catalyzes uridine to pseudouridine isomerization (pseudouridylation) of specific mitochondrial mRNAs (mt-mRNAs), a post-transcriptional modification necessary for their translation. Acts at position 390 in COXI mt-mRNA and at position 697-699 in mitochondrial COXIII mt-mRNA. As a component of a functional protein-RNA module, consisting of RCC1L, NGRN, RPUSD3, RPUSD4, TRUB2, FASTKD2 and 16S mitochondrial ribosomal RNA (16S mt-rRNA), controls 16S mt-rRNA abundance and may play a role in mitochondrial ribosome biogenesis. The polypeptide is Mitochondrial mRNA pseudouridine synthase RPUSD3 (RPUSD3) (Bos taurus (Bovine)).